The sequence spans 157 residues: 2-C-methyl-D-erythritol 2,4-cyclodiphosphate synthase (157 aa).

2 residues coordinate a divalent metal cation: Asp-8 and His-10. 4-CDP-2-C-methyl-D-erythritol 2-phosphate-binding positions include Asp-8–His-10 and His-34–Ser-35. His-42 serves as a coordination point for a divalent metal cation. Residues Asp-56–Gly-58, Phe-61–Asp-65, Ala-100–Leu-106, Thr-132–Glu-135, Phe-139, and Arg-142 contribute to the 4-CDP-2-C-methyl-D-erythritol 2-phosphate site.

The protein belongs to the IspF family. In terms of assembly, homotrimer. The cofactor is a divalent metal cation.

The catalysed reaction is 4-CDP-2-C-methyl-D-erythritol 2-phosphate = 2-C-methyl-D-erythritol 2,4-cyclic diphosphate + CMP. It functions in the pathway isoprenoid biosynthesis; isopentenyl diphosphate biosynthesis via DXP pathway; isopentenyl diphosphate from 1-deoxy-D-xylulose 5-phosphate: step 4/6. In terms of biological role, involved in the biosynthesis of isopentenyl diphosphate (IPP) and dimethylallyl diphosphate (DMAPP), two major building blocks of isoprenoid compounds. Catalyzes the conversion of 4-diphosphocytidyl-2-C-methyl-D-erythritol 2-phosphate (CDP-ME2P) to 2-C-methyl-D-erythritol 2,4-cyclodiphosphate (ME-CPP) with a corresponding release of cytidine 5-monophosphate (CMP). In Erwinia tasmaniensis (strain DSM 17950 / CFBP 7177 / CIP 109463 / NCPPB 4357 / Et1/99), this protein is 2-C-methyl-D-erythritol 2,4-cyclodiphosphate synthase.